The following is a 64-amino-acid chain: Large ribosomal subunit protein bL28 (64 aa).

The protein belongs to the bacterial ribosomal protein bL28 family.

This chain is Large ribosomal subunit protein bL28, found in Elusimicrobium minutum (strain Pei191).